Reading from the N-terminus, the 97-residue chain is UPF0235 protein APP7_1431 (97 aa).

The protein belongs to the UPF0235 family.

This Actinobacillus pleuropneumoniae serotype 7 (strain AP76) protein is UPF0235 protein APP7_1431.